Here is a 505-residue protein sequence, read N- to C-terminus: Lysine--tRNA ligase (505 aa).

Mg(2+) is bound by residues Glu-415 and Glu-422.

This sequence belongs to the class-II aminoacyl-tRNA synthetase family. As to quaternary structure, homodimer. It depends on Mg(2+) as a cofactor.

Its subcellular location is the cytoplasm. The catalysed reaction is tRNA(Lys) + L-lysine + ATP = L-lysyl-tRNA(Lys) + AMP + diphosphate. This is Lysine--tRNA ligase from Xanthomonas campestris pv. campestris (strain 8004).